A 273-amino-acid polypeptide reads, in one-letter code: NH(3)-dependent NAD(+) synthetase (273 aa).

Position 47-54 (47-54 (GISGGQDS)) interacts with ATP. Residue Asp53 participates in Mg(2+) binding. Arg139 contacts deamido-NAD(+). Thr159 is a binding site for ATP. Position 164 (Glu164) interacts with Mg(2+). Residues Lys172 and Asp179 each coordinate deamido-NAD(+). Residues Lys188 and Thr210 each coordinate ATP. 259–260 (HK) contacts deamido-NAD(+).

The protein belongs to the NAD synthetase family. As to quaternary structure, homodimer.

The catalysed reaction is deamido-NAD(+) + NH4(+) + ATP = AMP + diphosphate + NAD(+) + H(+). It functions in the pathway cofactor biosynthesis; NAD(+) biosynthesis; NAD(+) from deamido-NAD(+) (ammonia route): step 1/1. In terms of biological role, catalyzes the ATP-dependent amidation of deamido-NAD to form NAD. Uses ammonia as a nitrogen source. The sequence is that of NH(3)-dependent NAD(+) synthetase from Staphylococcus haemolyticus (strain JCSC1435).